The chain runs to 761 residues: Translation initiation factor IF-2 (761 aa).

Residues 39–179 (DEETLNKAKQ…KVNHQQMPLP (141 aa)) are disordered. Positions 45 to 105 (KAKQAGKPAA…NNQQSQSQGQ (61 aa)) are enriched in low complexity. Over residues 106 to 120 (TKRPSQASNNQSGAA) the composition is skewed to polar residues. The span at 142-154 (PGSNNRRPGNNQN) shows a compositional bias: low complexity. Basic residues predominate over residues 155–168 (RRNHGNRGGKRRPQ). One can recognise a tr-type G domain in the interval 262–435 (ERPPVVTIMG…EVEEFKANPD (174 aa)). Positions 271 to 278 (GHVDHGKT) are G1. 271–278 (GHVDHGKT) contributes to the GTP binding site. A G2 region spans residues 296-300 (GITQH). Residues 317–320 (DTPG) form a G3 region. GTP-binding positions include 317 to 321 (DTPGH) and 371 to 374 (NKID). The tract at residues 371 to 374 (NKID) is G4. The interval 407–409 (SAL) is G5.

It belongs to the TRAFAC class translation factor GTPase superfamily. Classic translation factor GTPase family. IF-2 subfamily.

Its subcellular location is the cytoplasm. One of the essential components for the initiation of protein synthesis. Protects formylmethionyl-tRNA from spontaneous hydrolysis and promotes its binding to the 30S ribosomal subunits. Also involved in the hydrolysis of GTP during the formation of the 70S ribosomal complex. This is Translation initiation factor IF-2 from Shouchella clausii (strain KSM-K16) (Alkalihalobacillus clausii).